The following is a 49-amino-acid chain: MTAKKVALACSVCGQRNYFVPENPKRTERLTLKKFCKHCGRVTVHQETK.

This sequence belongs to the bacterial ribosomal protein bL33 family.

The chain is Large ribosomal subunit protein bL33B from Lacticaseibacillus paracasei (strain ATCC 334 / BCRC 17002 / CCUG 31169 / CIP 107868 / KCTC 3260 / NRRL B-441) (Lactobacillus paracasei).